A 420-amino-acid chain; its full sequence is L-rhamnose isomerase (420 aa).

Residues H264, D296, and D298 each coordinate Mn(2+).

It belongs to the rhamnose isomerase family. Mn(2+) is required as a cofactor.

Its subcellular location is the cytoplasm. It carries out the reaction L-rhamnopyranose = L-rhamnulose. Its pathway is carbohydrate degradation; L-rhamnose degradation; glycerone phosphate from L-rhamnose: step 1/3. Catalyzes the interconversion of L-rhamnose and L-rhamnulose. This Listeria innocua serovar 6a (strain ATCC BAA-680 / CLIP 11262) protein is L-rhamnose isomerase.